Reading from the N-terminus, the 364-residue chain is Membrane-bound lytic murein transglycosylase C (364 aa).

The signal sequence occupies residues 1–19 (MNKYKKFLPLLVLIPFLAS). Residue C20 is the site of N-palmitoyl cysteine attachment. The S-diacylglycerol cysteine moiety is linked to residue C20.

The protein belongs to the transglycosylase Slt family.

Its subcellular location is the cell outer membrane. It carries out the reaction Exolytic cleavage of the (1-&gt;4)-beta-glycosidic linkage between N-acetylmuramic acid (MurNAc) and N-acetylglucosamine (GlcNAc) residues in peptidoglycan, from either the reducing or the non-reducing ends of the peptidoglycan chains, with concomitant formation of a 1,6-anhydrobond in the MurNAc residue.. Murein-degrading enzyme. May play a role in recycling of muropeptides during cell elongation and/or cell division. The chain is Membrane-bound lytic murein transglycosylase C from Glaesserella parasuis serovar 5 (strain SH0165) (Haemophilus parasuis).